The following is a 72-amino-acid chain: Translation initiation factor IF-1 (72 aa).

Positions 1–72 constitute an S1-like domain; sequence MSKEDMIEFS…TKGRITFRFK (72 aa).

Belongs to the IF-1 family. As to quaternary structure, component of the 30S ribosomal translation pre-initiation complex which assembles on the 30S ribosome in the order IF-2 and IF-3, IF-1 and N-formylmethionyl-tRNA(fMet); mRNA recruitment can occur at any time during PIC assembly.

It is found in the cytoplasm. Functionally, one of the essential components for the initiation of protein synthesis. Stabilizes the binding of IF-2 and IF-3 on the 30S subunit to which N-formylmethionyl-tRNA(fMet) subsequently binds. Helps modulate mRNA selection, yielding the 30S pre-initiation complex (PIC). Upon addition of the 50S ribosomal subunit IF-1, IF-2 and IF-3 are released leaving the mature 70S translation initiation complex. In Granulibacter bethesdensis (strain ATCC BAA-1260 / CGDNIH1), this protein is Translation initiation factor IF-1.